The primary structure comprises 647 residues: 1-phosphatidylinositol 4,5-bisphosphate phosphodiesterase zeta-1 (647 aa).

One can recognise an EF-hand domain in the interval 43 to 78; sequence CHFAHVKHIFKENDRQNQGRITIEEFRAIYRCIVHR. The PI-PLC X-box domain occupies 163-307; the sequence is QDMNHPLSDY…LKFKILVKNR (145 aa). Active-site residues include H178 and H223. Positions 386-502 constitute a PI-PLC Y-box domain; sequence LSDLVIYTKA…GYILKPDILR (117 aa). Residues 502–627 enclose the C2 domain; sequence RDTTLGFNPN…KGYRRVPLFS (126 aa).

Interacts via its C2 domain with PtdIns(3)P and, to a lesser extent, PtdIns(5)P in vitro. Requires Ca(2+) as cofactor. As to expression, highly expressed in postpuberal testis, where expression is sperm cell-specific. Also expressed in brain of both sexes.

Its subcellular location is the nucleus. The protein localises to the cytoplasm. The protein resides in the perinuclear region. It carries out the reaction a 1,2-diacyl-sn-glycero-3-phospho-(1D-myo-inositol-4,5-bisphosphate) + H2O = 1D-myo-inositol 1,4,5-trisphosphate + a 1,2-diacyl-sn-glycerol + H(+). The production of the second messenger molecules diacylglycerol (DAG) and inositol 1,4,5-trisphosphate (IP3) is mediated by activated phosphatidylinositol-specific phospholipase C enzymes. In vitro, hydrolyzes PtdIns(4,5)P2 in a Ca(2+)-dependent manner. Triggers intracellular Ca(2+) oscillations in oocytes solely during M phase and is involved in inducing oocyte activation and initiating embryonic development up to the blastocyst stage. Is therefore a strong candidate for the egg-activating soluble sperm factor that is transferred from the sperm into the egg cytoplasm following gamete membrane fusion. May exert an inhibitory effect on phospholipase-C-coupled processes that depend on calcium ions and protein kinase C, including CFTR trafficking and function. The polypeptide is 1-phosphatidylinositol 4,5-bisphosphate phosphodiesterase zeta-1 (Mus musculus (Mouse)).